The chain runs to 252 residues: MERVLIVNADDFGLSKGQNYGIVEAYRNGVVTSTTALVNGEAIDHAAQLSRELPALGVGMHFVLTLGKPVSEMPGLTRDGLLGKWIWQMAEEDTLPLDEIAHELACQYQRFIDVFGREPTHLDSHHHVHMFPQIFPIVARFAAQRGIALRIDRQTVLNADDLPSDLRSTQGFSSEFYGEEITEACFLRILDASAHRGEASLEVMCHPAFVDNIIRQSAYCYPRLTELEVLTSASLKAAIAERGYRPGSFLDI.

Residues H61 and H125 each coordinate Mg(2+).

This sequence belongs to the YdjC deacetylase family. ChbG subfamily. Homodimer. Requires Mg(2+) as cofactor.

The protein localises to the cytoplasm. It carries out the reaction N,N'-diacetylchitobiose + H2O = N-acetyl-beta-D-glucosaminyl-(1-&gt;4)-D-glucosamine + acetate. The enzyme catalyses diacetylchitobiose-6'-phosphate + H2O = N'-monoacetylchitobiose-6'-phosphate + acetate. It functions in the pathway glycan degradation; chitin degradation. Its function is as follows. Involved in the degradation of chitin. ChbG is essential for growth on the acetylated chitooligosaccharides chitobiose and chitotriose but is dispensable for growth on cellobiose and chitosan dimer, the deacetylated form of chitobiose. Deacetylation of chitobiose-6-P and chitotriose-6-P is necessary for both the activation of the chb promoter by the regulatory protein ChbR and the hydrolysis of phosphorylated beta-glucosides by the phospho-beta-glucosidase ChbF. Catalyzes the removal of only one acetyl group from chitobiose-6-P to yield monoacetylchitobiose-6-P, the inducer of ChbR and the substrate of ChbF. The protein is Chitooligosaccharide deacetylase of Salmonella paratyphi A (strain ATCC 9150 / SARB42).